The sequence spans 105 residues: Met repressor (105 aa).

The protein belongs to the MetJ family. In terms of assembly, homodimer.

Its subcellular location is the cytoplasm. Functionally, this regulatory protein, when combined with SAM (S-adenosylmethionine) represses the expression of the methionine regulon and of enzymes involved in SAM synthesis. The protein is Met repressor of Actinobacillus pleuropneumoniae serotype 7 (strain AP76).